The chain runs to 228 residues: UPF0758 protein SAB1521c (228 aa).

The region spanning 102 to 224 (KITQPSDVAD…FTSLVEAGYF (123 aa)) is the MPN domain. 3 residues coordinate Zn(2+): His173, His175, and Asp186. Positions 173 to 186 (HNHPSGDVTPSQED) match the JAMM motif motif.

It belongs to the UPF0758 family.

The polypeptide is UPF0758 protein SAB1521c (Staphylococcus aureus (strain bovine RF122 / ET3-1)).